The chain runs to 478 residues: Putative sulfate transporter YbaR (478 aa).

12 consecutive transmembrane segments (helical) span residues 19–39, 42–62, 65–85, 87–107, 121–141, 143–163, 168–188, 220–240, 259–279, 295–315, 345–365, and 366–386; these read ILAGILVALALIPEAIGFSII, VDPMVGLYASFCIAIIISIFG, PGMISAATGSMAVVMVSLVAD, GLQYLFAATILTGIIQVILGI, VMIGFVNALAILIFSAQLPQF, GASWSMYAMLAGSLVIIYVLP, AVPSPLVAIIVMTIIAVTFHV, IIFPYSIALAFVGLLESLLTA, GQGIANIVTGFFGGMAGCAMI, SAFVAGAFLMFLIAVLSHVVV, APLTDSIVMVVTVVTVVVTDD, and LSKGVFVGVLLSAVFFVAKIS. Positions 389 to 478 constitute an STAS domain; that stretch reads KIVSHAEDQK…ASKSLMKQMA (90 aa).

Belongs to the SLC26A/SulP transporter (TC 2.A.53) family.

It is found in the cell membrane. This is Putative sulfate transporter YbaR (ybaR) from Bacillus subtilis (strain 168).